We begin with the raw amino-acid sequence, 367 residues long: o-succinylbenzoate synthase (367 aa).

Catalysis depends on Lys-164, which acts as the Proton donor. Asp-189, Glu-214, and Asp-239 together coordinate Mg(2+). The active-site Proton acceptor is Lys-263.

This sequence belongs to the mandelate racemase/muconate lactonizing enzyme family. MenC type 2 subfamily. As to quaternary structure, homodimer. The cofactor is a divalent metal cation.

The enzyme catalyses (1R,6R)-6-hydroxy-2-succinyl-cyclohexa-2,4-diene-1-carboxylate = 2-succinylbenzoate + H2O. It functions in the pathway quinol/quinone metabolism; 1,4-dihydroxy-2-naphthoate biosynthesis; 1,4-dihydroxy-2-naphthoate from chorismate: step 4/7. Its pathway is quinol/quinone metabolism; menaquinone biosynthesis. Its function is as follows. Converts 2-succinyl-6-hydroxy-2,4-cyclohexadiene-1-carboxylate (SHCHC) to 2-succinylbenzoate (OSB). Also acts as a N-succinylamino acid racemase (NSAR) that catalyzes the racemization of N-succinyl-L-phenylglycine. Since the gene is encoded in a menaquinone synthesis operon, OSB synthase is probably the physiological activity. A pathway that requires NSAR activity has not been identified in this species, so whether NSAR is also a biological activity is unknown. The protein is o-succinylbenzoate synthase of Enterococcus faecalis (strain ATCC 700802 / V583).